We begin with the raw amino-acid sequence, 114 residues long: Class I hydrophobin 6 (114 aa).

The signal sequence occupies residues 1–19 (MLFKQLILVATALTTLAVA). 4 cysteine pairs are disulfide-bonded: C33–C93, C40–C87, C41–C74, and C94–C107. N42 is a glycosylation site (N-linked (GlcNAc...) asparagine).

The protein belongs to the fungal hydrophobin family. As to quaternary structure, self-assembles to form functional amyloid fibrils called rodlets. Self-assembly into fibrillar rodlets occurs spontaneously at hydrophobic:hydrophilic interfaces and the rodlets further associate laterally to form amphipathic monolayers.

The protein localises to the secreted. The protein resides in the cell wall. In terms of biological role, aerial growth, conidiation, and dispersal of filamentous fungi in the environment rely upon a capability of their secreting small amphipathic proteins called hydrophobins (HPBs) with low sequence identity. Class I can self-assemble into an outermost layer of rodlet bundles on aerial cell surfaces, conferring cellular hydrophobicity that supports fungal growth, development and dispersal; whereas Class II form highly ordered films at water-air interfaces through intermolecular interactions but contribute nothing to the rodlet structure. The chain is Class I hydrophobin 6 from Pleurotus ostreatus (strain PC15) (Oyster mushroom).